We begin with the raw amino-acid sequence, 205 residues long: Small ribosomal subunit protein uS4 (205 aa).

One can recognise an S4 RNA-binding domain in the interval 94 to 154; it reads SRLDNSVYRA…TRKDGKIRKN (61 aa).

It belongs to the universal ribosomal protein uS4 family. In terms of assembly, part of the 30S ribosomal subunit. Contacts protein S5. The interaction surface between S4 and S5 is involved in control of translational fidelity.

Functionally, one of the primary rRNA binding proteins, it binds directly to 16S rRNA where it nucleates assembly of the body of the 30S subunit. Its function is as follows. With S5 and S12 plays an important role in translational accuracy. This chain is Small ribosomal subunit protein uS4, found in Mesomycoplasma hyopneumoniae (strain 232) (Mycoplasma hyopneumoniae).